The primary structure comprises 187 residues: Bifunctional protein PyrR (187 aa).

Residues 109-121 carry the PRPP-binding motif; that stretch reads VILVDDVLYSGRS.

It belongs to the purine/pyrimidine phosphoribosyltransferase family. PyrR subfamily.

It catalyses the reaction UMP + diphosphate = 5-phospho-alpha-D-ribose 1-diphosphate + uracil. Its function is as follows. Regulates the transcription of the pyrimidine nucleotide (pyr) operon in response to exogenous pyrimidines. Also displays a weak uracil phosphoribosyltransferase activity which is not physiologically significant. This is Bifunctional protein PyrR from Mycobacterium ulcerans (strain Agy99).